The primary structure comprises 241 residues: MEKPRGVRCTNGFPERELPRPGASRPAEKSRPPEAKGAQPADAWKAGRPRSEEDNELNLPNLAAAYSSILRSLGEDPQRQGLLKTPWRAATAMQFFTKGYQETISDVLNDAIFDEDHDEMVIVKDIDMFSMCEHHLVPFVGRVHIGYLPNKQVLGLSKLARIVEIYSRRLQVQERLTKQIAVAITEALQPAGVGVVIEATHMCMVMRGVQKMNSKTVTSTMLGVFREDPKTREEFLTLIRS.

The propeptide occupies 1–11 (MEKPRGVRCTN). The interval 1-58 (MEKPRGVRCTNGFPERELPRPGASRPAEKSRPPEAKGAQPADAWKAGRPRSEEDNELN) is disordered. Phosphoserine is present on residues Ser-51 and Ser-72. Residues Cys-132, His-135, and Cys-203 each contribute to the Zn(2+) site.

This sequence belongs to the GTP cyclohydrolase I family. As to quaternary structure, toroid-shaped homodecamer, composed of two pentamers of five dimers. Interacts with AHSA1 and GCHFR/GFRP. Post-translationally, phosphorylated.

It localises to the cytoplasm. Its subcellular location is the nucleus. The enzyme catalyses GTP + H2O = 7,8-dihydroneopterin 3'-triphosphate + formate + H(+). Its pathway is cofactor biosynthesis; 7,8-dihydroneopterin triphosphate biosynthesis; 7,8-dihydroneopterin triphosphate from GTP: step 1/1. Its activity is regulated as follows. GTP shows a positive allosteric effect, and tetrahydrobiopterin inhibits the enzyme activity. Zinc is required for catalytic activity. Inhibited by Mg(2+). Functionally, may positively regulate nitric oxide synthesis in endothelial cells. May be involved in dopamine synthesis. May modify pain sensitivity and persistence. This chain is GTP cyclohydrolase 1 (Gch1), found in Rattus norvegicus (Rat).